A 158-amino-acid polypeptide reads, in one-letter code: Transcriptional regulator MraZ (158 aa).

2 consecutive SpoVT-AbrB domains span residues 7–66 (KEQH…EPSV) and 95–138 (LDCV…APEK).

Belongs to the MraZ family. Forms oligomers.

The protein localises to the cytoplasm. The protein resides in the nucleoid. The chain is Transcriptional regulator MraZ from Prosthecochloris aestuarii (strain DSM 271 / SK 413).